A 240-amino-acid polypeptide reads, in one-letter code: Orotidine 5'-phosphate decarboxylase (240 aa).

Residues D10, K32, 59–68 (DLKLHDIPNT), T122, R183, Q192, G212, and R213 each bind substrate. Residue K61 is the Proton donor of the active site.

Belongs to the OMP decarboxylase family. Type 1 subfamily. In terms of assembly, homodimer.

The enzyme catalyses orotidine 5'-phosphate + H(+) = UMP + CO2. Its pathway is pyrimidine metabolism; UMP biosynthesis via de novo pathway; UMP from orotate: step 2/2. Catalyzes the decarboxylation of orotidine 5'-monophosphate (OMP) to uridine 5'-monophosphate (UMP). The chain is Orotidine 5'-phosphate decarboxylase from Carboxydothermus hydrogenoformans (strain ATCC BAA-161 / DSM 6008 / Z-2901).